A 465-amino-acid chain; its full sequence is Argininosuccinate lyase (465 aa).

This sequence belongs to the lyase 1 family. Argininosuccinate lyase subfamily.

The protein localises to the cytoplasm. It catalyses the reaction 2-(N(omega)-L-arginino)succinate = fumarate + L-arginine. Its pathway is amino-acid biosynthesis; L-arginine biosynthesis; L-arginine from L-ornithine and carbamoyl phosphate: step 3/3. The chain is Argininosuccinate lyase from Methylococcus capsulatus (strain ATCC 33009 / NCIMB 11132 / Bath).